The following is a 185-amino-acid chain: Ribosome-recycling factor (185 aa).

This sequence belongs to the RRF family.

Its subcellular location is the cytoplasm. Responsible for the release of ribosomes from messenger RNA at the termination of protein biosynthesis. May increase the efficiency of translation by recycling ribosomes from one round of translation to another. In Streptococcus uberis (strain ATCC BAA-854 / 0140J), this protein is Ribosome-recycling factor.